Consider the following 53-residue polypeptide: Gene 87 protein (53 aa).

The polypeptide is Gene 87 protein (87) (Mycobacterium phage L5 (Mycobacteriophage L5)).